Reading from the N-terminus, the 343-residue chain is Twinfilin (343 aa).

ADF-H domains are found at residues 11 to 135 (EQLA…EGYR) and 184 to 312 (EATV…DELH). Residues 319 to 343 (RPAFAKPKGPPNRGAKRLTRPTAED) form a disordered region.

The protein belongs to the actin-binding proteins ADF family. Twinfilin subfamily. In terms of assembly, interacts with G-actin; ADP-actin form.

It is found in the cytoplasm. It localises to the cytoskeleton. The protein localises to the cell cortex. Actin-binding protein involved in motile and morphological processes. Inhibits actin polymerization, likely by sequestering G-actin. This chain is Twinfilin (twf), found in Drosophila melanogaster (Fruit fly).